Consider the following 726-residue polypeptide: DNA-directed RNA polymerase subunit beta N-terminal section (726 aa).

The protein belongs to the RNA polymerase beta chain family. In plastids the minimal PEP RNA polymerase catalytic core is composed of four subunits: alpha, beta, beta', and beta''. When a (nuclear-encoded) sigma factor is associated with the core the holoenzyme is formed, which can initiate transcription.

It is found in the plastid. Its subcellular location is the chloroplast. The enzyme catalyses RNA(n) + a ribonucleoside 5'-triphosphate = RNA(n+1) + diphosphate. In terms of biological role, DNA-dependent RNA polymerase catalyzes the transcription of DNA into RNA using the four ribonucleoside triphosphates as substrates. The sequence is that of DNA-directed RNA polymerase subunit beta N-terminal section (rpoB1) from Tetradesmus obliquus (Green alga).